The chain runs to 1214 residues: Brassinosteroid LRR receptor kinase BRL3 (1214 aa).

A signal peptide spans 1–29 (MAAVRVVAPAPSVLLLVAAAVVLLHLARA). N-linked (GlcNAc...) asparagine glycosylation is present at N61. The short motif at 69 to 76 (CAWAGVSC) is the Cys pair 1 element. LRR repeat units lie at residues 103-127 (LSAL…GSPR), 131-155 (PCAL…FLAS), 156-177 (CGGL…YPFP), 178-202 (PSLR…SLTG), 204-228 (HGIQ…PCTE), 230-250 (SVLD…FVAM), 252-276 (PANL…EFGG), 277-302 (CANL…LVDC), 303-325 (RRLE…TFLV), 327-351 (LQAL…LSIL), 353-375 (KTLV…SFGQ), 377-400 (RFLQ…VITN), 401-427 (ISSL…ASRC), 429-451 (LLEV…LCSS), 452-476 (LPSL…LSNC), 478-500 (NLES…ILFL), 502-525 (KLVD…CFNS), 526-549 (TALE…ITRC), 550-572 (VNLI…GFGN), 573-597 (LQNL…LGSC), 599-621 (NLIW…LAAQ), and 650-673 (GVLF…HLCS). N-linked (GlcNAc...) asparagine glycans are attached at residues N145, N163, N197, and N210. N-linked (GlcNAc...) asparagine glycans are attached at residues N254, N264, and N279. 2 N-linked (GlcNAc...) asparagine glycosylation sites follow: N400 and N413. N466 is a glycosylation site (N-linked (GlcNAc...) asparagine). 2 N-linked (GlcNAc...) asparagine glycosylation sites follow: N512 and N524. N-linked (GlcNAc...) asparagine glycosylation is present at N561. Y678 contacts brassinolide. LRR repeat units follow at residues 689-712 (NGSM…SFGN), 713-736 (MTYL…AFTG), 738-760 (KGIG…GFGC), and 762-786 (HFLA…QLIT). A Cys pair 2 motif is present at residues 799 to 806 (CGIPLNPC). The chain crosses the membrane as a helical span at residues 829 to 849 (SVFLAVTLSVLILFSLLIIHY). Positions 913–1196 (FCAETLIGSG…FQVDSGSNFL (284 aa)) constitute a Protein kinase domain. Residues 919-927 (IGSGGFGEV), K941, 987-989 (EYM), 993-996 (SLDF), 1039-1044 (DMKSSN), and D1057 each bind ATP. D1039 functions as the Proton acceptor in the catalytic mechanism.

The protein belongs to the protein kinase superfamily. Ser/Thr protein kinase family. Highly expressed in roots. Expressed at low levels in shoots.

It is found in the cell membrane. It catalyses the reaction L-seryl-[protein] + ATP = O-phospho-L-seryl-[protein] + ADP + H(+). The enzyme catalyses L-threonyl-[protein] + ATP = O-phospho-L-threonyl-[protein] + ADP + H(+). In terms of biological role, may be involved in brassenosteroid (BR) perception in roots. In Oryza sativa subsp. japonica (Rice), this protein is Brassinosteroid LRR receptor kinase BRL3.